The chain runs to 1008 residues: Probable beta-galactosidase B (1008 aa).

A signal peptide spans 1–18 (MLLQSLFAWALAIGPCIA). N20 and N23 each carry an N-linked (GlcNAc...) asparagine glycan. Residue Y87 participates in substrate binding. An N-linked (GlcNAc...) asparagine glycan is attached at N108. Residues N132, A133, E134, and N192 each coordinate substrate. E193 functions as the Proton donor in the catalytic mechanism. N208 carries N-linked (GlcNAc...) asparagine glycosylation. Y262 contacts substrate. A disulfide bond links C268 and C321. Residue N269 is glycosylated (N-linked (GlcNAc...) asparagine). The Nucleophile role is filled by E305. A substrate-binding site is contributed by Y370. N453, N594, N624, N681, N703, N782, N788, N816, N826, and N879 each carry an N-linked (GlcNAc...) asparagine glycan.

Belongs to the glycosyl hydrolase 35 family.

The protein resides in the secreted. It carries out the reaction Hydrolysis of terminal non-reducing beta-D-galactose residues in beta-D-galactosides.. Functionally, cleaves beta-linked terminal galactosyl residues from gangliosides, glycoproteins, and glycosaminoglycans. In Sclerotinia sclerotiorum (strain ATCC 18683 / 1980 / Ss-1) (White mold), this protein is Probable beta-galactosidase B (lacB).